Here is a 206-residue protein sequence, read N- to C-terminus: Probable glutathione S-transferase 8 (206 aa).

A GST N-terminal domain is found at 2–79 (VHYKLSYFPI…FLARQFGING (78 aa)). Residues Tyr8, Trp39, Lys43, 49–51 (GQL), and 63–64 (QS) each bind glutathione. Residues 81–206 (CAWEEAQVNS…WLETRPETQF (126 aa)) enclose the GST C-terminal domain.

It belongs to the GST superfamily. Sigma family.

The enzyme catalyses RX + glutathione = an S-substituted glutathione + a halide anion + H(+). Functionally, conjugation of reduced glutathione to a wide number of exogenous and endogenous hydrophobic electrophiles. This is Probable glutathione S-transferase 8 (gst-8) from Caenorhabditis elegans.